The primary structure comprises 398 residues: Tryptophan synthase beta chain (398 aa).

Residue lysine 92 is modified to N6-(pyridoxal phosphate)lysine.

It belongs to the TrpB family. Tetramer of two alpha and two beta chains. The cofactor is pyridoxal 5'-phosphate.

The enzyme catalyses (1S,2R)-1-C-(indol-3-yl)glycerol 3-phosphate + L-serine = D-glyceraldehyde 3-phosphate + L-tryptophan + H2O. The protein operates within amino-acid biosynthesis; L-tryptophan biosynthesis; L-tryptophan from chorismate: step 5/5. The beta subunit is responsible for the synthesis of L-tryptophan from indole and L-serine. In Nitrosospira multiformis (strain ATCC 25196 / NCIMB 11849 / C 71), this protein is Tryptophan synthase beta chain.